A 1184-amino-acid polypeptide reads, in one-letter code: DNA-directed RNA polymerase subunit beta (1184 aa).

Positions 1160-1184 are disordered; it reads DDDFTNQNDAFNIVQPENAAAEKTE.

It belongs to the RNA polymerase beta chain family. The RNAP catalytic core consists of 2 alpha, 1 beta, 1 beta' and 1 omega subunit. When a sigma factor is associated with the core the holoenzyme is formed, which can initiate transcription.

It carries out the reaction RNA(n) + a ribonucleoside 5'-triphosphate = RNA(n+1) + diphosphate. In terms of biological role, DNA-dependent RNA polymerase catalyzes the transcription of DNA into RNA using the four ribonucleoside triphosphates as substrates. The chain is DNA-directed RNA polymerase subunit beta from Listeria monocytogenes serotype 4b (strain F2365).